Here is an 82-residue protein sequence, read N- to C-terminus: DNA-directed RNA polymerase subunit omega (82 aa).

This sequence belongs to the RNA polymerase subunit omega family. The RNAP catalytic core consists of 2 alpha, 1 beta, 1 beta' and 1 omega subunit. When a sigma factor is associated with the core the holoenzyme is formed, which can initiate transcription.

It catalyses the reaction RNA(n) + a ribonucleoside 5'-triphosphate = RNA(n+1) + diphosphate. Promotes RNA polymerase assembly. Latches the N- and C-terminal regions of the beta' subunit thereby facilitating its interaction with the beta and alpha subunits. This is DNA-directed RNA polymerase subunit omega from Lachnoclostridium phytofermentans (strain ATCC 700394 / DSM 18823 / ISDg) (Clostridium phytofermentans).